The sequence spans 460 residues: Bifunctional protein GlmU (460 aa).

The tract at residues 1 to 229 (MKNYAIILAA…FDESLGVNDR (229 aa)) is pyrophosphorylase. Residues 8–11 (LAAG), lysine 22, glutamine 72, and 77–78 (GT) each bind UDP-N-acetyl-alpha-D-glucosamine. Aspartate 102 is a Mg(2+) binding site. UDP-N-acetyl-alpha-D-glucosamine-binding residues include glycine 139, glutamate 154, asparagine 169, and asparagine 227. Mg(2+) is bound at residue asparagine 227. The interval 230–250 (LALAQAEVIMQERINKQHMLN) is linker. Positions 251–460 (GVTLQNPAAT…RLPHHPDQPQ (210 aa)) are N-acetyltransferase. UDP-N-acetyl-alpha-D-glucosamine contacts are provided by arginine 332 and lysine 350. The active-site Proton acceptor is histidine 362. UDP-N-acetyl-alpha-D-glucosamine-binding residues include tyrosine 365 and asparagine 376. Residues alanine 379, 385–386 (NY), serine 404, alanine 422, and arginine 439 contribute to the acetyl-CoA site.

This sequence in the N-terminal section; belongs to the N-acetylglucosamine-1-phosphate uridyltransferase family. It in the C-terminal section; belongs to the transferase hexapeptide repeat family. In terms of assembly, homotrimer. Mg(2+) is required as a cofactor.

It is found in the cytoplasm. It catalyses the reaction alpha-D-glucosamine 1-phosphate + acetyl-CoA = N-acetyl-alpha-D-glucosamine 1-phosphate + CoA + H(+). The enzyme catalyses N-acetyl-alpha-D-glucosamine 1-phosphate + UTP + H(+) = UDP-N-acetyl-alpha-D-glucosamine + diphosphate. It participates in nucleotide-sugar biosynthesis; UDP-N-acetyl-alpha-D-glucosamine biosynthesis; N-acetyl-alpha-D-glucosamine 1-phosphate from alpha-D-glucosamine 6-phosphate (route II): step 2/2. Its pathway is nucleotide-sugar biosynthesis; UDP-N-acetyl-alpha-D-glucosamine biosynthesis; UDP-N-acetyl-alpha-D-glucosamine from N-acetyl-alpha-D-glucosamine 1-phosphate: step 1/1. The protein operates within bacterial outer membrane biogenesis; LPS lipid A biosynthesis. Functionally, catalyzes the last two sequential reactions in the de novo biosynthetic pathway for UDP-N-acetylglucosamine (UDP-GlcNAc). The C-terminal domain catalyzes the transfer of acetyl group from acetyl coenzyme A to glucosamine-1-phosphate (GlcN-1-P) to produce N-acetylglucosamine-1-phosphate (GlcNAc-1-P), which is converted into UDP-GlcNAc by the transfer of uridine 5-monophosphate (from uridine 5-triphosphate), a reaction catalyzed by the N-terminal domain. The polypeptide is Bifunctional protein GlmU (Streptococcus equi subsp. zooepidemicus (strain ATCC 35246 / C74-63)).